The following is a 122-amino-acid chain: Small ribosomal subunit protein uS13 (122 aa).

Positions 94–122 (KQLPVRGQRTHTNARTRKGKAKPIAGKKK) are disordered.

It belongs to the universal ribosomal protein uS13 family. In terms of assembly, part of the 30S ribosomal subunit. Forms a loose heterodimer with protein S19. Forms two bridges to the 50S subunit in the 70S ribosome.

Its function is as follows. Located at the top of the head of the 30S subunit, it contacts several helices of the 16S rRNA. In the 70S ribosome it contacts the 23S rRNA (bridge B1a) and protein L5 of the 50S subunit (bridge B1b), connecting the 2 subunits; these bridges are implicated in subunit movement. Contacts the tRNAs in the A and P-sites. In Methylorubrum extorquens (strain PA1) (Methylobacterium extorquens), this protein is Small ribosomal subunit protein uS13.